Here is a 335-residue protein sequence, read N- to C-terminus: N-lysine methyltransferase KMT5A-A (335 aa).

Disordered regions lie at residues 1–91 and 133–183; these read MGRG…EVEK and LPPE…EIES. A compositionally biased stretch (basic and acidic residues) spans 67-91; that stretch reads SVTHHESKCLGKPSTETRKKAEVEK. Basic residues predominate over residues 145 to 161; sequence VKNKPLRKKTQRQKSPN. Positions 199–320 constitute an SET domain; that stretch reads EGIKMHMITG…VGEELLYDYG (122 aa). S-adenosyl-L-methionine contacts are provided by residues 209–211, Tyr-254, and 281–282; these read KGR and NH.

This sequence belongs to the class V-like SAM-binding methyltransferase superfamily. Histone-lysine methyltransferase family. PR/SET subfamily.

The protein localises to the nucleus. The protein resides in the chromosome. It carries out the reaction L-lysyl(20)-[histone H4] + S-adenosyl-L-methionine = N(6)-methyl-L-lysyl(20)-[histone H4] + S-adenosyl-L-homocysteine + H(+). It catalyses the reaction L-lysyl-[protein] + S-adenosyl-L-methionine = N(6)-methyl-L-lysyl-[protein] + S-adenosyl-L-homocysteine + H(+). Protein-lysine N-methyltransferase that monomethylates both histones and non-histone proteins. Specifically monomethylates 'Lys-20' of histone H4 (H4K20me1). H4K20me1 is enriched during mitosis and represents a specific tag for epigenetic transcriptional repression. Mainly functions in euchromatin regions, thereby playing a central role in the silencing of euchromatic genes. Required for cell proliferation, probably by contributing to the maintenance of proper higher-order structure of DNA during mitosis. Involved in chromosome condensation and proper cytokinesis. This is N-lysine methyltransferase KMT5A-A from Xenopus laevis (African clawed frog).